A 185-amino-acid chain; its full sequence is Large ribosomal subunit protein uL22 (185 aa).

A disordered region spans residues 158–185 (AKPREDEPHKKKISKKKLARAKEKMLRE). The span at 167 to 176 (KKKISKKKLA) shows a compositional bias: basic residues.

This sequence belongs to the universal ribosomal protein uL22 family.

The chain is Large ribosomal subunit protein uL22 (RpL17) from Diaphorina citri (Asian citrus psyllid).